A 551-amino-acid chain; its full sequence is Arylsulfatase (551 aa).

Residues 1 to 20 (MKSAPFLFLLGLLGLVTAQT) form the signal peptide. Q21 carries the post-translational modification Blocked amino end (Gln). 3 residues coordinate Ca(2+): D60, H61, and C100. C100 acts as the Nucleophile in catalysis. Residue C100 is modified to 3-oxoalanine (Cys). Residue H158 is part of the active site. N-linked (GlcNAc...) asparagine glycosylation is found at N164, N213, and N296. D308 and H309 together coordinate Ca(2+).

The protein belongs to the sulfatase family. The cofactor is Ca(2+). Post-translationally, the conversion to 3-oxoalanine (also known as C-formylglycine, FGly), of a serine or cysteine residue in prokaryotes and of a cysteine residue in eukaryotes, is critical for catalytic activity.

Its subcellular location is the cytoplasm. The protein localises to the secreted. It localises to the extracellular space. It is found in the extracellular matrix. It catalyses the reaction an aryl sulfate + H2O = a phenol + sulfate + H(+). Its function is as follows. May be a structural component of the extracellular matrices involved in cell movement during morphogenesis. This Hemicentrotus pulcherrimus (Sea urchin) protein is Arylsulfatase.